Reading from the N-terminus, the 1581-residue chain is Laminin subunit gamma-3 (1581 aa).

Positions 1–28 (MAVSRVLSLLATVASMALVIQETHFAAG) are cleaved as a signal peptide. One can recognise a Laminin N-terminal domain in the interval 40-279 (RAQRCLPEFE…AVSDFSVGGR (240 aa)). An N-linked (GlcNAc...) asparagine glycan is attached at N128. Disulfide bonds link C280/C289, C282/C299, C301/C310, C313/C333, C336/C345, C338/C361, C364/C373, C376/C389, C392/C404, C394/C410, C412/C421, C424/C436, C439/C450, C441/C457, C459/C468, and C471/C486. Laminin EGF-like domains follow at residues 280 to 335 (CKCN…ECLP), 336 to 391 (CNCS…PCQP), 392 to 438 (CDCH…GCRP), and 439 to 488 (CACN…GCSS). N-linked (GlcNAc...) asparagine glycosylation occurs at N304. Residue N337 is glycosylated (N-linked (GlcNAc...) asparagine). In terms of domain architecture, Laminin EGF-like 5; first part spans 489–498 (CFCYGHSKVC). The region spanning 508–684 (HIRSDFRHGA…LAPPASWVET (177 aa)) is the Laminin IV type A domain. N640 is a glycosylation site (N-linked (GlcNAc...) asparagine). Residues 685 to 718 (CLCPQGYTGQFCEFCALGYKREIPHGGPYANCIP) enclose the Laminin EGF-like 5; second part domain. Disulfide bonds link C719-C727, C721-C734, C736-C745, C748-C764, C767-C775, C769-C786, C789-C798, C801-C819, C822-C836, C824-C843, C846-C855, C858-C875, C878-C891, C880-C898, C900-C909, C912-C925, C928-C940, C930-C947, C949-C958, C961-C973, C976-C988, C978-C994, C996-C1005, and C1008-C1021. 6 consecutive Laminin EGF-like domains span residues 719–766 (CTCN…DCQP), 767–821 (CPCP…PCRR), 822–877 (CQCS…KCAP), 878–927 (CSCD…GCQS), 928–975 (CKCH…GCRD), and 976–1024 (CRCS…CQEC). N849 carries an N-linked (GlcNAc...) asparagine glycan. The N-linked (GlcNAc...) asparagine glycan is linked to N991. Residues 1025–1581 (PTCYALVKEE…LSSLPENCAS (557 aa)) form a domain II and I region. 2 coiled-coil regions span residues 1029 to 1046 (ALVK…MLME) and 1112 to 1153 (VHCA…LASL). 2 N-linked (GlcNAc...) asparagine glycosylation sites follow: N1162 and N1196. Positions 1208 to 1231 (RVASEAQQELEDRYQEVQAAQTAL) form a coiled coil. The N-linked (GlcNAc...) asparagine glycan is linked to N1320. Residues 1382 to 1413 (KRKTKQAERMLGNAASLSSSTKKKSKEAELMS) are disordered. 2 coiled-coil regions span residues 1438-1468 (ASQT…AKQV) and 1510-1575 (AQTL…LSSL). An N-linked (GlcNAc...) asparagine glycan is attached at N1514.

Laminin is a complex glycoprotein, consisting of three different polypeptide chains (alpha, beta, gamma), which are bound to each other by disulfide bonds into a cross-shaped molecule comprising one long and three short arms with globules at each end. Gamma-3 is a subunit of laminin-12 (laminin-213), laminin-14 (laminin-423) and laminin-15 (laminin-523). Strongly expressed in capillaries and arterioles of kidney as well as in interstitial Leydig cells of testis.

The protein resides in the secreted. It localises to the extracellular space. The protein localises to the extracellular matrix. It is found in the basement membrane. Functionally, binding to cells via a high affinity receptor, laminin is thought to mediate the attachment, migration and organization of cells into tissues during embryonic development by interacting with other extracellular matrix components. The sequence is that of Laminin subunit gamma-3 (Lamc3) from Mus musculus (Mouse).